The following is a 466-amino-acid chain: Ribosomal protein uS12 methylthiotransferase RimO (466 aa).

One can recognise an MTTase N-terminal domain in the interval Pro-15 to Pro-125. Residues Cys-24, Cys-60, Cys-89, Cys-156, Cys-160, and Cys-163 each coordinate [4Fe-4S] cluster. The region spanning Leu-142–Arg-380 is the Radical SAM core domain. Residues Glu-382–Pro-450 enclose the TRAM domain.

Belongs to the methylthiotransferase family. RimO subfamily. Requires [4Fe-4S] cluster as cofactor.

The protein resides in the cytoplasm. The enzyme catalyses L-aspartate(89)-[ribosomal protein uS12]-hydrogen + (sulfur carrier)-SH + AH2 + 2 S-adenosyl-L-methionine = 3-methylsulfanyl-L-aspartate(89)-[ribosomal protein uS12]-hydrogen + (sulfur carrier)-H + 5'-deoxyadenosine + L-methionine + A + S-adenosyl-L-homocysteine + 2 H(+). Functionally, catalyzes the methylthiolation of an aspartic acid residue of ribosomal protein uS12. This chain is Ribosomal protein uS12 methylthiotransferase RimO, found in Xanthomonas oryzae pv. oryzae (strain MAFF 311018).